Here is a 286-residue protein sequence, read N- to C-terminus: Nucleotide-binding protein PLES_48441 (286 aa).

8-15 (GRSGSGKS) lines the ATP pocket. 60-63 (DARN) contributes to the GTP binding site.

The protein belongs to the RapZ-like family.

In terms of biological role, displays ATPase and GTPase activities. This is Nucleotide-binding protein PLES_48441 from Pseudomonas aeruginosa (strain LESB58).